The primary structure comprises 522 residues: Probable mannosyltransferase KTR5 (522 aa).

Topologically, residues 1–16 (MLLIRRTINAFLGCIH) are cytoplasmic. The chain crosses the membrane as a helical; Signal-anchor for type II membrane protein span at residues 17 to 37 (CNLTATCILIAFVITMYVVLV). Residues 38–82 (SEPASVDGTMGNFLPFSKMDLATKRDRPFYSNCVNTQDYLLNPSY) are stem region. Residues 38–522 (SEPASVDGTM…REDYLRQFGN (485 aa)) lie on the Lumenal side of the membrane. The interval 83 to 522 (IKQNASFVML…REDYLRQFGN (440 aa)) is catalytic. N-linked (GlcNAc...) asparagine glycosylation is present at Asn86. The active-site Nucleophile is Glu363.

Belongs to the glycosyltransferase 15 family.

Its subcellular location is the membrane. Its function is as follows. Possible glycosyltransferase that transfers an alpha-D-mannosyl residue from GDP-mannose into lipid-linked oligosaccharide, forming an alpha-(1-&gt;2)-D-mannosyl-D-mannose linkage. In Saccharomyces cerevisiae (strain ATCC 204508 / S288c) (Baker's yeast), this protein is Probable mannosyltransferase KTR5 (KTR5).